The following is a 221-amino-acid chain: Proline-rich protein 20A (221 aa).

2 disordered regions span residues 1-103 and 137-174; these read MEEP…QRQG and SLSE…GPQA. Over residues 42–53 the composition is skewed to low complexity; the sequence is PAQPAQPAKPIA. A compositionally biased stretch (pro residues) spans 63-72; it reads PARPESPPPA. The segment covering 75-93 has biased composition (basic residues); that stretch reads GRRRGGSRRPGRGRGRRAG.

It belongs to the PRR20 family.

The sequence is that of Proline-rich protein 20A (PRR20A) from Homo sapiens (Human).